Reading from the N-terminus, the 874-residue chain is S-layer protein (874 aa).

The signal sequence occupies residues 1–30 (MAKTNSYKKVIAGTMTAAMVAGVVSPVAAA). SLH domains follow at residues 31–93 (GKSF…NAQP), 94–151 (SFKD…KVDG), and 152–214 (TLVT…ENSD).

The protein resides in the secreted. The protein localises to the cell wall. It localises to the S-layer. Its function is as follows. The S-layer is a paracrystalline mono-layered assembly of proteins which coat the surface of bacteria. This Bacillus licheniformis protein is S-layer protein.